The following is a 210-amino-acid chain: Urease accessory protein UreE (210 aa).

Positions 136–210 (PEGGAYAEPS…HGHSHAHDHK (75 aa)) are disordered. 2 stretches are compositionally biased toward basic and acidic residues: residues 145-169 (SHAH…TSHD) and 178-196 (HDHD…EHCG). The segment covering 197–210 (HDHHHGHSHAHDHK) has biased composition (basic residues).

Belongs to the UreE family.

The protein localises to the cytoplasm. In terms of biological role, involved in urease metallocenter assembly. Binds nickel. Probably functions as a nickel donor during metallocenter assembly. This chain is Urease accessory protein UreE, found in Bradyrhizobium sp. (strain ORS 278).